Consider the following 469-residue polypeptide: E3 ubiquitin-protein ligase TRIM21 (469 aa).

Residues 16–55 (CSICLDPMVEPMSIECGHSFCQECISEVGKEGGSVCPVCR) form an RING-type zinc finger. A B box-type zinc finger spans residues 87-128 (PHGELCVVHREKIHLFCEEDGKALCWVCSQSQKHRDHPMVPI). The Zn(2+) site is built by C92, H95, C114, and H120. The stretch at 128–245 (IEEAAQEYQE…RRGSALELLQ (118 aa)) forms a coiled coil. S266 bears the Phosphoserine mark. The B30.2/SPRY domain maps to 268 to 467 (DLRNVFYVPG…APLILCPLKT (200 aa)).

This sequence belongs to the TRIM/RBCC family. Homotrimer. Interacts (via C-terminus) with IRF8 (via C-terminus). Component of a SCF(SKP2)-like complex containing CUL1, SKP1, TRIM21 and SKP2. Interacts with CALR, CUL1, FBXW11, HSPA5, IKBKB, IRF3, SKP1 and VCP. Interacts with SKP2; the interaction with SKP2 does not depend on an intact F-box domain. Interacts (via N-terminus and C-terminus) with DCP2 (via N-terminus and C-terminus). Interacts with ULK1, BECN1 and with ATG8 family members, including GABARAP, GABARAPL1, GABARAPL2 and MAP1LC3C/LC3C. Interacts with TRIM21 and SQSTM1/sequestosome 1. Interacts with IRF3. Interacts (via the SPRY domain) with NMI (via coiled-coil domain); the interaction promotes 'Lys-63'-linked ubiquitination of NMI. Interacts with IFI35 and NMI; the interaction facilitates NMI-IFI35 complex formation. Post-translationally, autoubiquitinated; does not lead to its proteasomal degradation. Deubiquitinated by USP4; leading to its stabilization.

It localises to the cytoplasm. The protein resides in the cytoplasmic vesicle. The protein localises to the autophagosome. It is found in the nucleus. Its subcellular location is the P-body. It localises to the stress granule. The catalysed reaction is S-ubiquitinyl-[E2 ubiquitin-conjugating enzyme]-L-cysteine + [acceptor protein]-L-lysine = [E2 ubiquitin-conjugating enzyme]-L-cysteine + N(6)-ubiquitinyl-[acceptor protein]-L-lysine.. Its pathway is protein modification; protein ubiquitination. Functionally, E3 ubiquitin-protein ligase whose activity is dependent on E2 enzymes, UBE2D1, UBE2D2, UBE2E1 and UBE2E2. Forms a ubiquitin ligase complex in cooperation with the E2 UBE2D2 that is used not only for the ubiquitination of USP4 and IKBKB but also for its self-ubiquitination. Component of cullin-RING-based SCF (SKP1-CUL1-F-box protein) E3 ubiquitin-protein ligase complexes such as SCF(SKP2)-like complexes. A TRIM21-containing SCF(SKP2)-like complex is shown to mediate ubiquitination of CDKN1B ('Thr-187' phosphorylated-form), thereby promoting its degradation by the proteasome. Monoubiquitinates IKBKB that will negatively regulates Tax-induced NF-kappa-B signaling. Negatively regulates IFN-beta production post-pathogen recognition by catalyzing polyubiquitin-mediated degradation of IRF3. Mediates the ubiquitin-mediated proteasomal degradation of IgG1 heavy chain, which is linked to the VCP-mediated ER-associated degradation (ERAD) pathway. Promotes IRF8 ubiquitination, which enhanced the ability of IRF8 to stimulate cytokine genes transcription in macrophages. Plays a role in the regulation of the cell cycle progression. Enhances the decapping activity of DCP2. Exists as a ribonucleoprotein particle present in all mammalian cells studied and composed of a single polypeptide and one of four small RNA molecules. At least two isoforms are present in nucleated and red blood cells, and tissue specific differences in RO/SSA proteins have been identified. The common feature of these proteins is their ability to bind HY RNAs.2. Involved in the regulation of innate immunity and the inflammatory response in response to IFNG/IFN-gamma. Organizes autophagic machinery by serving as a platform for the assembly of ULK1, Beclin 1/BECN1 and ATG8 family members and recognizes specific autophagy targets, thus coordinating target recognition with assembly of the autophagic apparatus and initiation of autophagy. Also regulates autophagy through FIP200/RB1CC1 ubiquitination and subsequent decreased protein stability. Represses the innate antiviral response by facilitating the formation of the NMI-IFI35 complex through 'Lys-63'-linked ubiquitination of NMI. During viral infection, promotes cell pyroptosis by mediating 'Lys-6'-linked ubiquitination of ISG12a/IFI27, facilitating its translocation into the mitochondria and subsequent CASP3 activation. When up-regulated through the IFN/JAK/STAT signaling pathway, promotes 'Lys-27'-linked ubiquitination of MAVS, leading to the recruitment of TBK1 and up-regulation of innate immunity. Mediates 'Lys-63'-linked polyubiquitination of G3BP1 in response to heat shock, leading to stress granule disassembly. The chain is E3 ubiquitin-protein ligase TRIM21 (TRIM21) from Bos taurus (Bovine).